Consider the following 356-residue polypeptide: Probable butyrate kinase (356 aa).

Belongs to the acetokinase family.

It localises to the cytoplasm. The catalysed reaction is butanoate + ATP = butanoyl phosphate + ADP. The chain is Probable butyrate kinase from Clostridium perfringens (strain SM101 / Type A).